We begin with the raw amino-acid sequence, 119 residues long: Large ribosomal subunit protein bL19 (119 aa).

It belongs to the bacterial ribosomal protein bL19 family.

Its function is as follows. This protein is located at the 30S-50S ribosomal subunit interface and may play a role in the structure and function of the aminoacyl-tRNA binding site. The chain is Large ribosomal subunit protein bL19 from Limosilactobacillus fermentum (strain NBRC 3956 / LMG 18251) (Lactobacillus fermentum).